An 82-amino-acid polypeptide reads, in one-letter code: Small ribosomal subunit protein uS17 (82 aa).

It belongs to the universal ribosomal protein uS17 family. Part of the 30S ribosomal subunit.

Functionally, one of the primary rRNA binding proteins, it binds specifically to the 5'-end of 16S ribosomal RNA. This is Small ribosomal subunit protein uS17 from Xanthobacter autotrophicus (strain ATCC BAA-1158 / Py2).